A 352-amino-acid chain; its full sequence is Spermidine/putrescine import ATP-binding protein PotA (352 aa).

Positions 7 to 237 constitute an ABC transporter domain; sequence IRLENVTKSF…PVNAFVADFI (231 aa). 39–46 contributes to the ATP binding site; the sequence is GPSGCGKT.

Belongs to the ABC transporter superfamily. Spermidine/putrescine importer (TC 3.A.1.11.1) family. The complex is composed of two ATP-binding proteins (PotA), two transmembrane proteins (PotB and PotC) and a solute-binding protein (PotD).

It localises to the cell membrane. It catalyses the reaction ATP + H2O + polyamine-[polyamine-binding protein]Side 1 = ADP + phosphate + polyamineSide 2 + [polyamine-binding protein]Side 1.. Its function is as follows. Part of the ABC transporter complex PotABCD involved in spermidine/putrescine import. Responsible for energy coupling to the transport system. The sequence is that of Spermidine/putrescine import ATP-binding protein PotA from Acetivibrio thermocellus (strain ATCC 27405 / DSM 1237 / JCM 9322 / NBRC 103400 / NCIMB 10682 / NRRL B-4536 / VPI 7372) (Clostridium thermocellum).